An 866-amino-acid polypeptide reads, in one-letter code: Speckle targeted PIP5K1A-regulated poly(A) polymerase (866 aa).

A Matrin-type zinc finger spans residues 16 to 46 (FRCCLCDVTTANRPSLDAHLKGRKHRDLVQL). Residues 56–128 (RSVFVSGFPR…HTLRVRPREQ (73 aa)) enclose the RRM domain. Positions 116-147 (LGGHTLRVRPREQKEFQSPASKSPKGVDSNSH) are disordered. Residue Ser-205 participates in ATP binding. Mg(2+)-binding residues include Asp-216 and Asp-218. UTP is bound by residues Asp-216 and Asp-218. 2 disordered regions span residues 223–249 (LGDMEEPQPDPQTPKLPEASSLDSTLA) and 267–321 (LSPT…EGKH). Over residues 282–304 (TPSSLAPQTPDSALGSDTVTSPQ) the composition is skewed to polar residues. Asn-393 serves as a coordination point for ATP. UTP is bound by residues Asn-393, Arg-415, Tyr-433, and His-550. The PAP-associated domain occupies 492–550 (LSSLLAQFFSCVSCWDLSGSLLSLREGQALMVAGGLPSDLWEGLRLGPMNLQDPFDLSH). The interval 599–866 (SSPSSLLSAK…IPQALKNLLK (268 aa)) is KA1; binds the bulging loops of U6 snRNA but is dispensable for terminal uridylyltransferase activity. Disordered stretches follow at residues 638–687 (QGTK…DHSE), 728–755 (EQNPMEPEGAGEGSPGETEKEASHPSSV), and 773–792 (RRRFQQQTKEEGRGGPSTGA). Residues 669–687 (KSCEEGKEEPQGCAGDHSE) are compositionally biased toward basic and acidic residues. A phosphoserine mark is found at Ser-686 and Ser-741.

This sequence belongs to the DNA polymerase type-B-like family. Associates with the cleavage and polyadenylation specificity factor (CPSF) complex. Interacts with CPSF1 and CPSF3; the interaction is direct. Interacts with PIP5K1A. Mg(2+) is required as a cofactor. The cofactor is Mn(2+). Post-translationally, phosphorylated by CK1 in the proline-rich (Pro-rich) region.

The protein localises to the nucleus. It is found in the nucleolus. The protein resides in the nucleus speckle. The enzyme catalyses RNA(n) + UTP = RNA(n)-3'-uridine ribonucleotide + diphosphate. It carries out the reaction RNA(n) + ATP = RNA(n)-3'-adenine ribonucleotide + diphosphate. With respect to regulation, adenylyltransferase activity is specifically phosphatidylinositol 4,5-bisphosphate (PtdIns(4,5)P2). Its function is as follows. Poly(A) polymerase that creates the 3'-poly(A) tail of specific pre-mRNAs. Localizes to nuclear speckles together with PIP5K1A and mediates polyadenylation of a select set of mRNAs, such as HMOX1. In addition to polyadenylation, it is also required for the 3'-end cleavage of pre-mRNAs: binds to the 3'UTR of targeted pre-mRNAs and promotes the recruitment and assembly of the CPSF complex on the 3'UTR of pre-mRNAs. In addition to adenylyltransferase activity, also has uridylyltransferase activity. However, the ATP ratio is higher than UTP in cells, suggesting that it functions primarily as a poly(A) polymerase. Acts as a specific terminal uridylyltransferase for U6 snRNA in vitro: responsible for a controlled elongation reaction that results in the restoration of the four 3'-terminal UMP-residues found in newly transcribed U6 snRNA. Not involved in replication-dependent histone mRNA degradation. This is Speckle targeted PIP5K1A-regulated poly(A) polymerase (Tut1) from Rattus norvegicus (Rat).